The primary structure comprises 238 residues: Uridylate kinase (238 aa).

12–15 (KLSG) lines the ATP pocket. A UMP-binding site is contributed by G54. ATP-binding residues include G55 and R59. Residues D74 and 135–142 (TGNPYFST) contribute to the UMP site. ATP contacts are provided by Y168 and D171.

Belongs to the UMP kinase family. In terms of assembly, homohexamer.

The protein resides in the cytoplasm. It carries out the reaction UMP + ATP = UDP + ADP. It participates in pyrimidine metabolism; CTP biosynthesis via de novo pathway; UDP from UMP (UMPK route): step 1/1. With respect to regulation, inhibited by UTP. Its function is as follows. Catalyzes the reversible phosphorylation of UMP to UDP. The chain is Uridylate kinase from Syntrophomonas wolfei subsp. wolfei (strain DSM 2245B / Goettingen).